Here is a 161-residue protein sequence, read N- to C-terminus: Nucleotide-binding protein Sden_0770 (161 aa).

The protein belongs to the YajQ family.

Nucleotide-binding protein. In Shewanella denitrificans (strain OS217 / ATCC BAA-1090 / DSM 15013), this protein is Nucleotide-binding protein Sden_0770.